Here is a 748-residue protein sequence, read N- to C-terminus: Phosphoenolpyruvate-dependent phosphotransferase system (748 aa).

In terms of domain architecture, GAF spans 1–127 (MLTRLREIVE…RRQLLGVLVV (127 aa)). Positions 128 to 170 (QQRELRQYDESEESFLVTLATQMAAILSQSQVTALFGQYRQTR) are linker. The PTS EI stretch occupies residues 171–748 (IRALPAAPGV…GMGGLIRGGL (578 aa)). His356 acts as the Tele-phosphohistidine intermediate in catalysis. 2 residues coordinate phosphoenolpyruvate: Arg462 and Arg498. Mg(2+) contacts are provided by Glu597 and Asp621. Residues 620–621 (ND) and Arg631 contribute to the phosphoenolpyruvate site. The active-site Proton donor is Cys668.

The protein belongs to the PEP-utilizing enzyme family. Mg(2+) serves as cofactor.

The protein localises to the cytoplasm. The catalysed reaction is L-histidyl-[protein] + phosphoenolpyruvate = N(pros)-phospho-L-histidyl-[protein] + pyruvate. Functionally, component of the phosphoenolpyruvate-dependent nitrogen-metabolic phosphotransferase system (nitrogen-metabolic PTS), that seems to be involved in regulating nitrogen metabolism. Enzyme I-Ntr transfers the phosphoryl group from phosphoenolpyruvate (PEP) to the phosphoryl carrier protein (NPr). Could function in the transcriptional regulation of sigma-54 dependent operons in conjunction with the NPr (PtsO) and EIIA-Ntr (PtsN) proteins. Enzyme I-Ntr is specific for NPr. In Salmonella typhimurium (strain LT2 / SGSC1412 / ATCC 700720), this protein is Phosphoenolpyruvate-dependent phosphotransferase system (ptsP).